Here is a 1760-residue protein sequence, read N- to C-terminus: Cilia- and flagella-associated protein 44 (1760 aa).

5 WD repeats span residues 119–160 (GATK…MVLR), 163–202 (CHNT…TGLK), 213–251 (LEIS…CCFA), 276–315 (CHEG…VAEG), and 388–427 (FNGG…ELYK). The segment covering 1155-1165 (RQEEKLREQTA) has biased composition (basic and acidic residues). The tract at residues 1155–1224 (RQEEKLREQT…FGTAAARTRS (70 aa)) is disordered. Positions 1181–1190 (PATNTDTSGA) are enriched in polar residues. Residues 1194–1205 (ATRRSEGEDSRK) are compositionally biased toward basic and acidic residues. The stretch at 1348 to 1389 (YDEARNSRDRCLREMEELQRLVQDQTASIEKLQEANKVFRRE) forms a coiled coil. Residues 1420 to 1444 (HSDMSGNDDDITSDDDDDDDMGEDE) form a disordered region. Positions 1425 to 1444 (GNDDDITSDDDDDDDMGEDE) are enriched in acidic residues.

It belongs to the CFAP44 family.

It localises to the cell projection. The protein resides in the cilium. It is found in the flagellum. Its subcellular location is the cytoplasm. The protein localises to the cytoskeleton. It localises to the flagellum axoneme. Flagellar protein involved in flagellum axoneme organization and function. The chain is Cilia- and flagella-associated protein 44 from Trypanosoma brucei brucei (strain 927/4 GUTat10.1).